Reading from the N-terminus, the 348-residue chain is D-alanine--D-alanine ligase (348 aa).

Residues 132–334 (KRVLESIGIP…YPDLIEELVT (203 aa)) form the ATP-grasp domain. 162-217 (LARLTFPIFVKPANMGSSVGISKAQTKVELRKAIQLALTYDSRVLIEQGVVAREIE) contributes to the ATP binding site. Residues Asp-288, Glu-301, and Asn-303 each coordinate Mg(2+).

It belongs to the D-alanine--D-alanine ligase family. The cofactor is Mg(2+). It depends on Mn(2+) as a cofactor.

It is found in the cytoplasm. It catalyses the reaction 2 D-alanine + ATP = D-alanyl-D-alanine + ADP + phosphate + H(+). It participates in cell wall biogenesis; peptidoglycan biosynthesis. Its function is as follows. Cell wall formation. This is D-alanine--D-alanine ligase from Streptococcus pyogenes serotype M18 (strain MGAS8232).